Here is a 233-residue protein sequence, read N- to C-terminus: Charged multivesicular body protein 4c (233 aa).

Disordered regions lie at residues 1-24 (MSKL…SPQE) and 173-233 (QEEL…AWAT). Residues 1-153 (MSKLGKFFKG…EISEAFSQRV (153 aa)) are intramolecular interaction with C-terminus. A coiled-coil region spans residues 125-183 (LNKIDDLMQEITEQQDIAQEISEAFSQRVGFGDDFDEDELMAELEELEQEELNKKMTNI). The tract at residues 154 to 233 (GFGDDFDEDE…DIKQLAAWAT (80 aa)) is intramolecular interaction with N-terminus. Positions 204 to 216 (SSTARRSRAASSQ) are enriched in low complexity. Position 210 is a phosphoserine; by AURKB (Ser-210).

This sequence belongs to the SNF7 family. As to quaternary structure, probable core component of the endosomal sorting required for transport complex III (ESCRT-III). ESCRT-III components are thought to multimerize to form a flat lattice on the perimeter membrane of the endosome. Several assembly forms of ESCRT-III may exist that interact and act sequentially. Self-associates. Interacts with CHMP2A. Interacts with CHMP4A. Interacts with CHMP4B. Interacts with CHMP6. Interacts with VPS4A. Interacts with PDCD6IP; the interaction is direct. Phosphorylated at Ser-210 by AURKB during cytokinesis: together with ZFYVE19/ANCHR, phosphorylated CHMP4C retains abscission-competent VPS4 (VPS4A and/or VPS4B) at the midbody ring until abscission checkpoint signaling is terminated at late cytokinesis. Expressed in heart, spleen and kidney.

It is found in the cytoplasm. The protein resides in the cytosol. It localises to the late endosome membrane. Its subcellular location is the midbody. The protein localises to the midbody ring. Functionally, probable core component of the endosomal sorting required for transport complex III (ESCRT-III) which is involved in multivesicular bodies (MVBs) formation and sorting of endosomal cargo proteins into MVBs. MVBs contain intraluminal vesicles (ILVs) that are generated by invagination and scission from the limiting membrane of the endosome and mostly are delivered to lysosomes enabling degradation of membrane proteins, such as stimulated growth factor receptors, lysosomal enzymes and lipids. The MVB pathway appears to require the sequential function of ESCRT-O, -I,-II and -III complexes. ESCRT-III proteins mostly dissociate from the invaginating membrane before the ILV is released. The ESCRT machinery also functions in topologically equivalent membrane fission events, such as the terminal stages of cytokinesis and the budding of enveloped viruses (HIV-1 and other lentiviruses). Key component of the cytokinesis checkpoint, a process required to delay abscission to prevent both premature resolution of intercellular chromosome bridges and accumulation of DNA damage: upon phosphorylation by AURKB, together with ZFYVE19/ANCHR, retains abscission-competent VPS4 (VPS4A and/or VPS4B) at the midbody ring until abscission checkpoint signaling is terminated at late cytokinesis. Deactivation of AURKB results in dephosphorylation of CHMP4C followed by its dissociation from ANCHR and VPS4 and subsequent abscission. ESCRT-III proteins are believed to mediate the necessary vesicle extrusion and/or membrane fission activities, possibly in conjunction with the AAA ATPase VPS4. Involved in HIV-1 p6- and p9-dependent virus release. CHMP4A/B/C are required for the exosomal release of SDCBP, CD63 and syndecan. The protein is Charged multivesicular body protein 4c (CHMP4C) of Homo sapiens (Human).